Consider the following 716-residue polypeptide: Phosphoribosylformylglycinamidine synthase subunit PurL (716 aa).

His-34 is a catalytic residue. Position 37 (Tyr-37) interacts with ATP. Residue Glu-78 participates in Mg(2+) binding. Residues 79–82 (SHNH) and Arg-101 each bind substrate. His-80 serves as the catalytic Proton acceptor. Asp-102 provides a ligand contact to Mg(2+). Gln-226 contributes to the substrate binding site. Asp-254 is a binding site for Mg(2+). 298–300 (ESQ) contacts substrate. Residues Asp-474 and Gly-511 each contribute to the ATP site. A Mg(2+)-binding site is contributed by Asn-512. Ser-514 provides a ligand contact to substrate.

Belongs to the FGAMS family. Monomer. Part of the FGAM synthase complex composed of 1 PurL, 1 PurQ and 2 PurS subunits.

Its subcellular location is the cytoplasm. The enzyme catalyses N(2)-formyl-N(1)-(5-phospho-beta-D-ribosyl)glycinamide + L-glutamine + ATP + H2O = 2-formamido-N(1)-(5-O-phospho-beta-D-ribosyl)acetamidine + L-glutamate + ADP + phosphate + H(+). Its pathway is purine metabolism; IMP biosynthesis via de novo pathway; 5-amino-1-(5-phospho-D-ribosyl)imidazole from N(2)-formyl-N(1)-(5-phospho-D-ribosyl)glycinamide: step 1/2. In terms of biological role, part of the phosphoribosylformylglycinamidine synthase complex involved in the purines biosynthetic pathway. Catalyzes the ATP-dependent conversion of formylglycinamide ribonucleotide (FGAR) and glutamine to yield formylglycinamidine ribonucleotide (FGAM) and glutamate. The FGAM synthase complex is composed of three subunits. PurQ produces an ammonia molecule by converting glutamine to glutamate. PurL transfers the ammonia molecule to FGAR to form FGAM in an ATP-dependent manner. PurS interacts with PurQ and PurL and is thought to assist in the transfer of the ammonia molecule from PurQ to PurL. In Methanobrevibacter smithii (strain ATCC 35061 / DSM 861 / OCM 144 / PS), this protein is Phosphoribosylformylglycinamidine synthase subunit PurL.